A 164-amino-acid polypeptide reads, in one-letter code: S-ribosylhomocysteine lyase (164 aa).

Positions 61, 65, and 131 each coordinate Fe cation.

This sequence belongs to the LuxS family. As to quaternary structure, homodimer. Fe cation serves as cofactor.

The catalysed reaction is S-(5-deoxy-D-ribos-5-yl)-L-homocysteine = (S)-4,5-dihydroxypentane-2,3-dione + L-homocysteine. Its function is as follows. Involved in the synthesis of autoinducer 2 (AI-2) which is secreted by bacteria and is used to communicate both the cell density and the metabolic potential of the environment. The regulation of gene expression in response to changes in cell density is called quorum sensing. Catalyzes the transformation of S-ribosylhomocysteine (RHC) to homocysteine (HC) and 4,5-dihydroxy-2,3-pentadione (DPD). The protein is S-ribosylhomocysteine lyase of Bifidobacterium longum subsp. infantis (strain ATCC 15697 / DSM 20088 / JCM 1222 / NCTC 11817 / S12).